The chain runs to 249 residues: Carboxy-S-adenosyl-L-methionine synthase (249 aa).

S-adenosyl-L-methionine contacts are provided by residues Tyr-39, 64–66, 117–118, Asn-132, and Arg-199; these read GCS and DI.

The protein belongs to the class I-like SAM-binding methyltransferase superfamily. Cx-SAM synthase family. As to quaternary structure, homodimer.

It catalyses the reaction prephenate + S-adenosyl-L-methionine = carboxy-S-adenosyl-L-methionine + 3-phenylpyruvate + H2O. Functionally, catalyzes the conversion of S-adenosyl-L-methionine (SAM) to carboxy-S-adenosyl-L-methionine (Cx-SAM). This is Carboxy-S-adenosyl-L-methionine synthase from Aeromonas hydrophila subsp. hydrophila (strain ATCC 7966 / DSM 30187 / BCRC 13018 / CCUG 14551 / JCM 1027 / KCTC 2358 / NCIMB 9240 / NCTC 8049).